The sequence spans 553 residues: CTP synthase (553 aa).

Positions 1 to 277 (MPTEPETDYD…DQYVMEELDI (277 aa)) are amidoligase domain. S26 is a CTP binding site. UTP is bound at residue S26. ATP is bound by residues 27–32 (GLGKGI) and D84. The Mg(2+) site is built by D84 and E152. CTP is bound by residues 159–161 (DIE), 198–203 (KTKPTQ), and K234. UTP-binding positions include 198–203 (KTKPTQ) and K234. V252 lines the ATP pocket. The Glutamine amidotransferase type-1 domain occupies 307–544 (LVGKYDLEDA…LEAVLGDDPH (238 aa)). An L-glutamine-binding site is contributed by G364. The Nucleophile; for glutamine hydrolysis role is filled by C391. L-glutamine contacts are provided by residues 392–395 (LGFQ), E415, and R472. Residues H517 and E519 contribute to the active site.

It belongs to the CTP synthase family. In terms of assembly, homotetramer.

The protein localises to the cytoplasm. It carries out the reaction UTP + L-glutamine + ATP + H2O = CTP + L-glutamate + ADP + phosphate + 2 H(+). The catalysed reaction is L-glutamine + H2O = L-glutamate + NH4(+). The enzyme catalyses UTP + NH4(+) + ATP = CTP + ADP + phosphate + 2 H(+). The protein operates within pyrimidine metabolism; CTP biosynthesis via de novo pathway; CTP from UDP: step 2/2. Its activity is regulated as follows. Allosterically activated by GTP, when glutamine is the substrate; GTP has no effect on the reaction when ammonia is the substrate. The allosteric effector GTP functions by stabilizing the protein conformation that binds the tetrahedral intermediate(s) formed during glutamine hydrolysis. Inhibited by the product CTP, via allosteric rather than competitive inhibition. Inhibited by 6-diazo-5-oxo-l-norleucine (DON). Functionally, catalyzes the ATP-dependent amination of UTP to CTP with either L-glutamine or ammonia as the source of nitrogen. Regulates intracellular CTP levels through interactions with the four ribonucleotide triphosphates. This chain is CTP synthase, found in Haloarcula hispanica (strain ATCC 33960 / DSM 4426 / JCM 8911 / NBRC 102182 / NCIMB 2187 / VKM B-1755).